The chain runs to 267 residues: Thyroxine 5-deiodinase (267 aa).

Over 1 to 15 the chain is Cytoplasmic; it reads MHDSGGVQMARALKH. Residues 16–36 form a helical; Signal-anchor for type II membrane protein membrane-spanning segment; it reads AALCLMLLPRFLLAAVMLWLL. Residues 37–267 lie on the Extracellular side of the membrane; it reads DFLCIRKKVL…VNSQTAVLHV (231 aa). Sec131 is a catalytic residue. Sec131 is a non-standard amino acid (selenocysteine).

It belongs to the iodothyronine deiodinase family. Monomer. Homodimer. May undergo minor heretodimerization with DIO1 and DIO2.

It is found in the cell membrane. The protein resides in the endosome membrane. It carries out the reaction 3,3',5'-triiodo-L-thyronine + iodide + A + H(+) = L-thyroxine + AH2. The enzyme catalyses 3,3'-diiodo-L-thyronine + iodide + A + H(+) = 3,3',5-triiodo-L-thyronine + AH2. It catalyses the reaction 3-iodo-L-thyronine + iodide + A + H(+) = 3,5-diiodo-L-thyronine + AH2. The catalysed reaction is L-thyronine + iodide + A + H(+) = 3-iodo-L-thyronine + AH2. It carries out the reaction 3',5'-diiodo-L-thyronine + iodide + A + H(+) = 3,3',5'-triiodo-L-thyronine + AH2. The enzyme catalyses 3'-iodo-L-thyronine + iodide + A + H(+) = 3,3'-diiodo-L-thyronine + AH2. It catalyses the reaction 3,3',5'-triiodothyronamine + iodide + A + H(+) = 3,3',5,5'-tetraiodothyronamine + AH2. The catalysed reaction is 3',5'-diiodothyronamine + iodide + A + H(+) = 3,3',5'-triiodothyronamine + AH2. It carries out the reaction 3,3'-diiodothyronamine + iodide + A + H(+) = 3,3',5-triiodothyronamine + AH2. The enzyme catalyses 3-iodothyronamine + iodide + A + H(+) = 3,5-diiodothyronamine + AH2. It catalyses the reaction 3'-iodothyronamine + iodide + A + H(+) = 3,3'-diiodothyronamine + AH2. The catalysed reaction is thyronamine + iodide + A + H(+) = 3-iodothyronamine + AH2. Functionally, plays a crucial role in the metabolism of thyroid hormones (TH) and has specific roles in TH activation and inactivation by deiodination. Catalyzes the deiodination of L-thyroxine (T4) to 3,3',5'-triiodothyronine (rT3), 3,5,3'-triiodothyronine (T3) to 3,3'-diiodothyronine (3,3'-T2), 3,5-diiodothyronine (3,5-T2) to 3-monoiodothyronine (3-T1), rT3 to 3',5'-diiodothyronine (3',5'-T2) and 3,3'-T2 to 3'-monoiodothyronine (3'-T1) via inner-ring deiodination (IRD). Catalyzes the deiodination of 3-T1 to L-thyronine (T0) via outer-ring deiodination (ORD). Catalyzes the tyrosyl ring deiodinations of 3,3',5,5'-tetraiodothyronamine, 3,3',5'-triiodothyronamine, 3,5,3'-triiodothyronamine, 3,5-diiodothyronamine, 3,3'-diiodothyronamine and 3-iodothyronamine. In Sparus aurata (Gilthead sea bream), this protein is Thyroxine 5-deiodinase (dio3).